A 92-amino-acid polypeptide reads, in one-letter code: uncharacterized protein (92 aa).

The span at 1-10 (MGLLKKKDST) shows a compositional bias: basic and acidic residues. Positions 1–21 (MGLLKKKDSTSARSSTSPCAD) are disordered. In terms of domain architecture, CHCH spans 16 to 66 (TSPCADLRNAYHNCFNKWYSEKFVKGQWDKEECVAEWKKYRDCLSENLDGK). Short sequence motifs (cx9C motif) lie at residues 19-29 (CADLRNAYHNC) and 48-58 (CVAEWKKYRDC). 2 disulfides stabilise this stretch: cysteine 19–cysteine 58 and cysteine 29–cysteine 48.

Belongs to the TRIAP1/MDM35 family.

This is an uncharacterized protein from Arabidopsis thaliana (Mouse-ear cress).